A 598-amino-acid polypeptide reads, in one-letter code: Elongation factor 4 (598 aa).

The 183-residue stretch at 4–186 (SHIRNFAIIA…AIVSRLPAPS (183 aa)) folds into the tr-type G domain. Residues 16-21 (DHGKST) and 133-136 (NKID) contribute to the GTP site.

It belongs to the TRAFAC class translation factor GTPase superfamily. Classic translation factor GTPase family. LepA subfamily.

Its subcellular location is the cell inner membrane. The enzyme catalyses GTP + H2O = GDP + phosphate + H(+). Required for accurate and efficient protein synthesis under certain stress conditions. May act as a fidelity factor of the translation reaction, by catalyzing a one-codon backward translocation of tRNAs on improperly translocated ribosomes. Back-translocation proceeds from a post-translocation (POST) complex to a pre-translocation (PRE) complex, thus giving elongation factor G a second chance to translocate the tRNAs correctly. Binds to ribosomes in a GTP-dependent manner. The protein is Elongation factor 4 of Ehrlichia chaffeensis (strain ATCC CRL-10679 / Arkansas).